We begin with the raw amino-acid sequence, 249 residues long: Cis-4-hydroxycyclohexanecarboxylate dehydrogenase (249 aa).

Residues D38, D63, V64, N90, Y156, K160, A189, and T191 each contribute to the NAD(+) site. The Proton acceptor role is filled by Y156.

It belongs to the short-chain dehydrogenases/reductases (SDR) family. As to quaternary structure, homotetramer.

The enzyme catalyses cis-4-hydroxycyclohexane-1-carboxylate + NAD(+) = 4-oxocyclohexane-1-carboxylate + NADH + H(+). In terms of biological role, dehydrogenase involved in a cyclohexanecarboxylate (CHCA) degradation pathway. Catalyzes the NAD(+)-dependent dehydrogenation of cis-4-hydroxycyclohexanecarboxylate (cis-4-hydroxyCHCA) to form 4-oxocyclohexanecarboxylate (4-oxoCHCA). Is highly specific for the cis-4-hydroxy derivative and shows only weak activity with trans-4-hydroxyCHCA. Cannot use NADP(+). The sequence is that of Cis-4-hydroxycyclohexanecarboxylate dehydrogenase from Sinomonas cyclohexanicum (Corynebacterium cyclohexanicum).